The chain runs to 126 residues: Holo-[acyl-carrier-protein] synthase (126 aa).

Mg(2+) contacts are provided by Asp-9 and Glu-58.

The protein belongs to the P-Pant transferase superfamily. AcpS family. Mg(2+) is required as a cofactor.

The protein localises to the cytoplasm. The enzyme catalyses apo-[ACP] + CoA = holo-[ACP] + adenosine 3',5'-bisphosphate + H(+). Its function is as follows. Transfers the 4'-phosphopantetheine moiety from coenzyme A to a Ser of acyl-carrier-protein. The polypeptide is Holo-[acyl-carrier-protein] synthase (Yersinia pseudotuberculosis serotype I (strain IP32953)).